Consider the following 406-residue polypeptide: Vacuole membrane protein 1 (406 aa).

A compositionally biased stretch (basic and acidic residues) spans 1–20 (MAENGKNCDQRRIAMSKDQH). The disordered stretch occupies residues 1-37 (MAENGKNCDQRRIAMSKDQHNGSLTDPSSVHEKKRRD). Residue A2 is modified to N-acetylalanine. At 2-77 (AENGKNCDQR…WTSKLWHRQS (76 aa)) the chain is on the cytoplasmic side. Residues 78–98 (IVVSFLLLLAALVATYYVEGA) form a helical membrane-spanning segment. Over 99 to 109 (HQQYVQRIEKQ) the chain is Extracellular. The chain crosses the membrane as a helical span at residues 110–130 (FLLYAYWIGLGILSSVGLGTG). The Cytoplasmic portion of the chain corresponds to 131–250 (LHTFLLYLGP…ASRAKLAVQK (120 aa)). Residues 173-316 (GAEGAISLWS…FVIVTFSKHI (144 aa)) form a VTT domain region. Residues 251–271 (LVQKVGFFGILACASIPNPLF) traverse the membrane as a helical segment. Topologically, residues 272–273 (DL) are extracellular. Residues 274–294 (AGITCGHFLVPFWTFFGATLI) form a helical membrane-spanning segment. Over 295–305 (GKAIIKMHIQK) the chain is Cytoplasmic. Residues 306–326 (IFVIVTFSKHIVEQMVTFIGA) form a helical membrane-spanning segment. The Extracellular segment spans residues 327–363 (VPGIGPSLQKPFQEYLEAQRQKLHHRSEAGTPQGENW). A helical membrane pass occupies residues 364-384 (LSWMFEKLVVAMVCYFVLSII). The Cytoplasmic portion of the chain corresponds to 385–406 (NSMAQNYAKRIQQRLNSEEKTK).

Belongs to the VMP1 family. Interacts with BECN1. Interacts with TJP1. Interacts with TP53INP2. Interacts with TMEM41B. Interacts with ATP2A2, PLN and SLN; competes with PLN and SLN to prevent them from forming an inhibitory complex with ATP2A2. Interacts with ATG2A.

It localises to the endoplasmic reticulum-Golgi intermediate compartment membrane. The protein localises to the cell membrane. Its subcellular location is the vacuole membrane. The protein resides in the endoplasmic reticulum membrane. It catalyses the reaction a 1,2-diacyl-sn-glycero-3-phospho-L-serine(in) = a 1,2-diacyl-sn-glycero-3-phospho-L-serine(out). It carries out the reaction cholesterol(in) = cholesterol(out). The enzyme catalyses a 1,2-diacyl-sn-glycero-3-phosphocholine(in) = a 1,2-diacyl-sn-glycero-3-phosphocholine(out). The catalysed reaction is a 1,2-diacyl-sn-glycero-3-phosphoethanolamine(in) = a 1,2-diacyl-sn-glycero-3-phosphoethanolamine(out). Phospholipid scramblase involved in lipid homeostasis and membrane dynamics processes. Has phospholipid scramblase activity toward cholesterol and phosphatidylserine, as well as phosphatidylethanolamine and phosphatidylcholine. Required for autophagosome formation: participates in early stages of autophagosome biogenesis at the endoplasmic reticulum (ER) membrane by reequilibrating the leaflets of the ER as lipids are extracted by ATG2 (ATG2A or ATG2B) to mediate autophagosome assembly. Regulates ATP2A2 activity to control ER-isolation membrane contacts for autophagosome formation. In addition to autophagy, involved in other processes in which phospholipid scramblase activity is required. Modulates ER contacts with lipid droplets, mitochondria and endosomes. Plays an essential role in formation of cell junctions. Upon stress such as bacterial and viral infection, promotes formation of cytoplasmic vacuoles followed by cell death. Involved in the cytoplasmic vacuolization of acinar cells during the early stage of acute pancreatitis. The polypeptide is Vacuole membrane protein 1 (Mus musculus (Mouse)).